The sequence spans 83 residues: MKASMYLALAGLVLLFVVGYASESEEKEFPRELLSKIFAVDDFKGEERGCKGFGDSCTPGKNERCPNYACSSKHKWCKVYLGK.

An N-terminal signal peptide occupies residues 1–21 (MKASMYLALAGLVLLFVVGYA). Residues 22–48 (SESEEKEFPRELLSKIFAVDDFKGEER) constitute a propeptide that is removed on maturation. Disulfide bonds link Cys50-Cys65 and Cys57-Cys70. Leu81 carries the leucine amide modification.

It belongs to the neurotoxin 10 (Hwtx-1) family. 15 (Hntx-3) subfamily. As to quaternary structure, monomer. Expressed by the venom gland.

The protein localises to the secreted. In terms of biological role, lethal neurotoxin. Selectively blocks tetrodotoxin-sensitive voltage-gated sodium channels (Nav). Does not affect tetrodotoxin-resistant voltage-gated sodium channels or calcium channels. The sequence is that of Mu-theraphotoxin-Hhn2g from Cyriopagopus hainanus (Chinese bird spider).